Reading from the N-terminus, the 218-residue chain is Protein-L-isoaspartate O-methyltransferase (218 aa).

Ser60 is an active-site residue.

It belongs to the methyltransferase superfamily. L-isoaspartyl/D-aspartyl protein methyltransferase family.

Its subcellular location is the cytoplasm. It catalyses the reaction [protein]-L-isoaspartate + S-adenosyl-L-methionine = [protein]-L-isoaspartate alpha-methyl ester + S-adenosyl-L-homocysteine. Functionally, catalyzes the methyl esterification of L-isoaspartyl residues in peptides and proteins that result from spontaneous decomposition of normal L-aspartyl and L-asparaginyl residues. It plays a role in the repair and/or degradation of damaged proteins. This is Protein-L-isoaspartate O-methyltransferase from Roseiflexus castenholzii (strain DSM 13941 / HLO8).